Consider the following 146-residue polypeptide: VHLTGEEKAAVTALWGKVNVDEVGGEALGRLLVVYPWTQRFFDSFGDLSSPDAVMGNPKVKAHGKKVLNSFSEGLKNLDNLKGTFAKLSELHCDKLHVDPENFKLLGNVLVCVLAHHFGKEFTPQVQAAYQKVVAGVANALAHKYH.

Position 1 is an N-acetylvaline (Val-1). The 145-residue stretch at 2 to 146 (HLTGEEKAAV…VANALAHKYH (145 aa)) folds into the Globin domain. Thr-12 is modified (phosphothreonine). The residue at position 44 (Ser-44) is a Phosphoserine. Lys-59 carries the post-translational modification N6-acetyllysine. Residue His-63 coordinates heme b. Lys-82 carries the N6-acetyllysine modification. His-92 lines the heme b pocket. Position 93 is an S-nitrosocysteine (Cys-93). The residue at position 144 (Lys-144) is an N6-acetyllysine.

This sequence belongs to the globin family. As to quaternary structure, heterotetramer of two alpha chains and two beta chains. Red blood cells.

In terms of biological role, involved in oxygen transport from the lung to the various peripheral tissues. The protein is Hemoglobin subunit beta (HBB) of Martes foina (Beech marten).